The primary structure comprises 812 residues: Phosphoenolpyruvate synthase (812 aa).

Residue H430 is the Tele-phosphohistidine intermediate of the active site. R520, R588, E690, G711, S712, N713, and D714 together coordinate substrate. E690 provides a ligand contact to Mg(2+). Mg(2+) is bound at residue D714. The active-site Proton donor is C761.

Belongs to the PEP-utilizing enzyme family. It depends on Mg(2+) as a cofactor.

The enzyme catalyses pyruvate + ATP + H2O = phosphoenolpyruvate + AMP + phosphate + 2 H(+). The protein operates within carbohydrate biosynthesis; gluconeogenesis. Catalyzes the phosphorylation of pyruvate to phosphoenolpyruvate. This Helicobacter pylori (strain ATCC 700392 / 26695) (Campylobacter pylori) protein is Phosphoenolpyruvate synthase (ppsA).